The sequence spans 286 residues: Puff II/9-1 protein (286 aa).

The N-terminal stretch at 1–19 (MKQFIVLTVVLLAIQELQG) is a signal peptide. The helical stretch occupies residues 61–235 (ITAIKKDNDF…ENALNTLRCE (175 aa)). A glycan (N-linked (GlcNAc...) asparagine) is linked at asparagine 156.

The sequence is that of Puff II/9-1 protein (II/9-1) from Bradysia coprophila (Dark-winged fungus gnat).